The sequence spans 419 residues: UDP-N-acetylglucosamine 1-carboxyvinyltransferase 2 (419 aa).

Position 24–25 (24–25) interacts with phosphoenolpyruvate; it reads KN. Arg-94 contacts UDP-N-acetyl-alpha-D-glucosamine. Residue Cys-118 is the Proton donor of the active site. Cys-118 carries the post-translational modification 2-(S-cysteinyl)pyruvic acid O-phosphothioketal. Residues 123–127, Asp-307, and Ile-329 contribute to the UDP-N-acetyl-alpha-D-glucosamine site; that span reads RPIDQ.

This sequence belongs to the EPSP synthase family. MurA subfamily.

The protein resides in the cytoplasm. It catalyses the reaction phosphoenolpyruvate + UDP-N-acetyl-alpha-D-glucosamine = UDP-N-acetyl-3-O-(1-carboxyvinyl)-alpha-D-glucosamine + phosphate. It participates in cell wall biogenesis; peptidoglycan biosynthesis. Its function is as follows. Cell wall formation. Adds enolpyruvyl to UDP-N-acetylglucosamine. The protein is UDP-N-acetylglucosamine 1-carboxyvinyltransferase 2 of Staphylococcus aureus (strain MRSA252).